Here is a 630-residue protein sequence, read N- to C-terminus: Chaperone protein DnaK (630 aa).

Threonine 197 bears the Phosphothreonine; by autocatalysis mark. The segment covering lysine 604–asparagine 618 has biased composition (polar residues). Positions lysine 604–lysine 630 are disordered. Residues glutamate 619–lysine 630 are compositionally biased toward basic and acidic residues.

The protein belongs to the heat shock protein 70 family.

Acts as a chaperone. This Karelsulcia muelleri (strain GWSS) (Sulcia muelleri) protein is Chaperone protein DnaK.